Consider the following 742-residue polypeptide: UPF0313 protein MA_4618 (742 aa).

The tract at residues 1-125 (MGVRKQTMVK…SFSSSLPASK (125 aa)) is disordered. A unknown region spans residues 1–128 (MGVRKQTMVK…SSLPASKFLP (128 aa)). Composition is skewed to basic and acidic residues over residues 17 to 40 (ENKKFTREKKDKEKDKKPDRERAG) and 49 to 73 (KKVETGKKGKLGRKSEGKAEEKAEG). The segment covering 106–115 (TGKKEKKQKK) has biased composition (basic residues). The segment at 129–742 (MSPEEVKARG…KCLIRRKEKQ (614 aa)) is UPF0313. The 270-residue stretch at 438–707 (ALEMVKFSLT…AMQRALMHYR (270 aa)) folds into the Radical SAM core domain. [4Fe-4S] cluster is bound by residues cysteine 452, cysteine 456, and cysteine 459.

In the C-terminal section; belongs to the UPF0313 family. It depends on [4Fe-4S] cluster as a cofactor.

This is UPF0313 protein MA_4618 from Methanosarcina acetivorans (strain ATCC 35395 / DSM 2834 / JCM 12185 / C2A).